Reading from the N-terminus, the 742-residue chain is Protein-associating with the carboxyl-terminal domain of ezrin (742 aa).

A lipid anchor (N-myristoyl glycine) is attached at G2. Positions 2–245 constitute a Protein kinase domain; sequence GSENSALKSY…LCTLLSHDFF (244 aa). HEAT repeat units follow at residues 199–238, 285–323, 333–370, and 372–409; these read ESLL…ALCT, LIAS…HAQG, LFQS…HFTQ, and QLKK…LLGP. The residue at position 439 (S439) is a Phosphoserine. 3 disordered regions span residues 506–544, 568–598, and 629–652; these read LSDV…QTVN, SSWD…TSGE, and GDDA…VPSE. The segment covering 529–539 has biased composition (acidic residues); that stretch reads WPDWSEPEEPE. Residues 548-742 form an interaction with EZR region; the sequence is WPREPCDDVK…GELNWEDNNW (195 aa). At S707 the chain carries Phosphoserine. The segment at 723–742 is disordered; the sequence is EGEAEGWEEEGELNWEDNNW.

The protein belongs to the protein kinase superfamily. In terms of assembly, interacts with EZR/VIL2 C-terminal domain. May be myristoylated; myristoylation may target it to Golgi compartment. In terms of processing, phosphorylated. As to expression, ubiquitously expressed.

It is found in the cytoplasm. It localises to the golgi apparatus. Its subcellular location is the cell projection. The protein resides in the lamellipodium. In terms of biological role, may play a role in regulating cell adhesion/migration complexes in migrating cells. The chain is Protein-associating with the carboxyl-terminal domain of ezrin (SCYL3) from Homo sapiens (Human).